Consider the following 129-residue polypeptide: Glycophorin-A (129 aa).

Positions 1-17 are cleaved as a signal peptide; it reads MYEKIVIVLLLSGYIST. Gln-18 carries the post-translational modification Pyrrolidone carboxylic acid. Residues 18-82 lie on the Extracellular side of the membrane; that stretch reads QDVTEIIPHE…QLVHIFSEPV (65 aa). O-linked (GalNAc...) serine glycans are attached at residues Ser-29 and Ser-30. O-linked (GalNAc...) threonine glycosylation is present at Thr-34. O-linked (GalNAc...) serine glycosylation occurs at Ser-40. 2 O-linked (GalNAc...) threonine glycosylation sites follow: Thr-41 and Thr-48. Residue Ser-56 is glycosylated (O-linked (GalNAc...) serine). A helical membrane pass occupies residues 83–103; the sequence is IIGIIYAVMLGIIITILSIAF. The Cytoplasmic segment spans residues 104–129; that stretch reads CIGQLTKKSSLPAQVASPEDVDPEVL.

The protein belongs to the glycophorin-A family. In terms of assembly, homodimer. Component of the ankyrin-1 complex in the erythrocyte, composed of ANK1, RHCE, RHAG, SLC4A1, EPB42, GYPA, GYPB and AQP1. Interacts with SLC4A1; a GYPA monomer is bound at each end of the SLC4A1 dimer forming a heterotetramer.

The protein localises to the membrane. Its function is as follows. Component of the ankyrin-1 complex, a multiprotein complex involved in the stability and shape of the erythrocyte membrane. Glycophorin A is the major intrinsic membrane protein of the erythrocyte. The N-terminal glycosylated segment, which lies outside the erythrocyte membrane, has MN blood group receptors. Appears to be important for the function of SLC4A1 and is required for high activity of SLC4A1. May be involved in translocation of SLC4A1 to the plasma membrane. In Canis lupus familiaris (Dog), this protein is Glycophorin-A.